Reading from the N-terminus, the 104-residue chain is Flagellar hook-basal body complex protein FliE (104 aa).

This sequence belongs to the FliE family.

The protein resides in the bacterial flagellum basal body. The chain is Flagellar hook-basal body complex protein FliE from Pectobacterium carotovorum subsp. carotovorum (strain PC1).